Reading from the N-terminus, the 93-residue chain is UPF0337 protein Bd3330 (93 aa).

This sequence belongs to the UPF0337 (CsbD) family.

The polypeptide is UPF0337 protein Bd3330 (Bdellovibrio bacteriovorus (strain ATCC 15356 / DSM 50701 / NCIMB 9529 / HD100)).